An 878-amino-acid chain; its full sequence is Enoyl-CoA isomerase/hydratase claC (878 aa).

The segment at 541–561 (VGPASTEATSPVVEPSTMESD) is disordered. Substrate contacts are provided by residues 677 to 681 (AGADL) and G724.

This sequence belongs to the enoyl-CoA hydratase/isomerase family.

Its pathway is secondary metabolite biosynthesis. Enoyl-CoA isomerase/hydratase; part of the cla gene cluster that produces clavatol and ortho-quinone methide. The clavatol biosynthesis cluster cla and the terrestric acid cluster tra are both involved in the production of peniphenones and penilactones. The non-reducing PKS claF is responsible for the formation of clavatol from successive condensations of 3 malonyl-CoA units, presumably with a simple acetyl-CoA starter unit, and 2 methylation steps. The esterase claE probably collaborates with claF by catalyzing the hydrolysis of ACP-bound acyl intermediates to free the ACP from stalled intermediates. The clavatol oxidase claD then converts clavatol to hydroxyclavatol. Spontaneous dehydration of hydroxyclavatol leads to the accumulation of the highly active ortho-quinone methide. On the other hand, the PKS-NRPS hybrid traA is involved in the formation of crustosic acid, with the help of traB and traD. The polyketide synthase module (PKS) of traA is responsible for the synthesis of the polyketide backbone via the condensation of an acetyl-CoA starter unit with 3 malonyl-CoA units. The downstream nonribosomal peptide synthetase (NRPS) module then amidates the carboxyl end of the polyketide with L-malic acid. Because traA lacks a designated enoylreductase (ER) domain, the required activity is provided the enoyl reductase traG. Crustosic acid undergoes decarboxylation and isomerization to the terrestric acid, catalyzed by the 2-oxoglutarate-dependent dioxygenase traH. Both acids are further converted to the 2 gamma-butyrolactones (R)-5-methyltetronic acid and (S)-5-carboxylmethyltetronic acid, with involvement of the cytochrome P450 monooxygenase claJ. Spontaneous addition of the methide to these gamma-butyrolactones leads to peniphenone D and penilactone D, which undergo again stereospecific attacking by methide to give penilactones A and B. The function of the enoyl-CoA isomerase/hydratase claC has not been investigated yet. The protein is Enoyl-CoA isomerase/hydratase claC of Penicillium crustosum (Blue mold fungus).